A 333-amino-acid polypeptide reads, in one-letter code: MSTYYNDHLAAAEKDISSSNFCNLVDASVMLYDEEHRDLLPKKVNSRCQAKTKKQEKESDKRFFDLFPKKRRTSVVTVRNPEQNQQNLHRVSTSSSLLDLNTIPGDSSDPRNELQGLLSSSSSSFLGDYERKTPQNASSSSTLLAEYNTEMANPPNPNSETSLKRKHSDSEPKKAKTPYSWKGREAPEWLVKMMGTMQGSEGPRLIYEKTLTETDVKPVQSRLLMPFNTLIRNDFLTPVELRILLELEDDTDGVGATLVDPWEVKWGVILKKREMKKYSGKGSLNYAIICGWNDIVEANVLEKDDDISIWSFRRGRNGILSFALVLPPPPDMA.

Composition is skewed to polar residues over residues 76–99 and 134–143; these read VTVRNPEQNQQNLHRVSTSSSLLD and PQNASSSSTL. Residues 76–179 are disordered; the sequence is VTVRNPEQNQ…SEPKKAKTPY (104 aa). Residues 220–328 constitute a DNA-binding region (TF-B3); sequence QSRLLMPFNT…ILSFALVLPP (109 aa).

The protein resides in the nucleus. This is B3 domain-containing protein At1g32030 from Arabidopsis thaliana (Mouse-ear cress).